The primary structure comprises 282 residues: Undecaprenyl-diphosphatase (282 aa).

A run of 7 helical transmembrane segments spans residues 45–65, 86–106, 114–134, 151–171, 196–216, 224–244, and 256–276; these read AFME…VVFI, WQLW…GIPL, FHNF…FILI, LPYK…FPGT, FFLG…KFIL, GQLT…MYVI, and FTVF…YWVF.

Belongs to the UppP family.

The protein localises to the cell membrane. The enzyme catalyses di-trans,octa-cis-undecaprenyl diphosphate + H2O = di-trans,octa-cis-undecaprenyl phosphate + phosphate + H(+). In terms of biological role, catalyzes the dephosphorylation of undecaprenyl diphosphate (UPP). Confers resistance to bacitracin. The polypeptide is Undecaprenyl-diphosphatase (Streptococcus gordonii (strain Challis / ATCC 35105 / BCRC 15272 / CH1 / DL1 / V288)).